Reading from the N-terminus, the 63-residue chain is Overexpressed in colon carcinoma 1 protein homolog (63 aa).

A compositionally biased stretch (polar residues) spans 1-10 (MGCGNSTATS). The segment at 1 to 39 (MGCGNSTATSAAAGRGPTGAVKDTTEDSITEDDKRRNYG) is disordered.

It belongs to the OCC1 family.

The polypeptide is Overexpressed in colon carcinoma 1 protein homolog (Mus musculus (Mouse)).